A 603-amino-acid polypeptide reads, in one-letter code: MIQSDEDNLDSSETTASTSYSGTSSVSSRLQLRTSLFFENLNGAHGNPDAETEMATVAYETTSRGQGFAVYINNERFSQIMGASTSSSSSSNSSSITQFHDTQDNNIPSNTTVRPTSLRRDNEDTVPLRNVTPSQNAAVRPERAVNSPSSQRLSCALTISTSVLMGEDVEGSPIEQEHSRVVSSLYSSLANRGNDESKNGTPPRPTSIEPNETTEHSFFSYHYDDTLEPDVEEAVRLTKNKTSNVNFISSTGSKGEGETEDEVIDQYEPVNESKFIPHKLKIPEKAGSIKSSTSDDSHSPGAPGTSARKIKIPQSPSLIGNILIPSHNSDSSNESSPKDHIGHNNEEKFSSKSTRKPSTSLEEEGPPIGLPSIPVLRSVSGPSKWTKTPLRLESGNSTKSDPFSRYEGHKTPSPLTKMNKKKNKTLPEHGQPLVLAPIKSQSSESDTGQNSIIEKPARSIRRKQQEKTDNRKEDRHDAENIDLEARMPIQHIDTASIHSFDSGQNGFRDVYSIENIIVILLCCSIVPPLFFIIGCSSRRKLVSDYRLMRLLMNKEHRAALLQGFIWDVDLRWFRMFCLILGAAETVIVMAGIAIGFGVGITRE.

A compositionally biased stretch (acidic residues) spans 1-10; the sequence is MIQSDEDNLD. Disordered stretches follow at residues 1 to 25, 83 to 150, and 190 to 212; these read MIQSDEDNLDSSETTASTSYSGTSS, ASTS…SPSS, and ANRGNDESKNGTPPRPTSIEPNE. Over 1–515 the chain is Extracellular; it reads MIQSDEDNLD…GFRDVYSIEN (515 aa). Low complexity-rich tracts occupy residues 11–25 and 84–95; these read SSETTASTSYSGTSS and STSSSSSSNSSS. Asn-92, Asn-110, Asn-211, Asn-240, Asn-271, and Asn-333 each carry an N-linked (GlcNAc...) asparagine glycan. Residues 96–115 are compositionally biased toward polar residues; the sequence is ITQFHDTQDNNIPSNTTVRP. The disordered stretch occupies residues 286 to 479; that stretch reads AGSIKSSTSD…NRKEDRHDAE (194 aa). Over residues 325 to 335 the composition is skewed to low complexity; it reads PSHNSDSSNES. The span at 336-350 shows a compositional bias: basic and acidic residues; that stretch reads SPKDHIGHNNEEKFS. 2 N-linked (GlcNAc...) asparagine glycosylation sites follow: Asn-396 and Asn-423. The segment covering 439 to 452 has biased composition (polar residues); that stretch reads KSQSSESDTGQNSI. Positions 463–479 are enriched in basic and acidic residues; it reads KQQEKTDNRKEDRHDAE. The helical transmembrane segment at 516 to 536 threads the bilayer; the sequence is IIVILLCCSIVPPLFFIIGCS. Topologically, residues 537-577 are cytoplasmic; it reads SRRKLVSDYRLMRLLMNKEHRAALLQGFIWDVDLRWFRMFC. The helical transmembrane segment at 578–598 threads the bilayer; that stretch reads LILGAAETVIVMAGIAIGFGV. Over 599-603 the chain is Extracellular; it reads GITRE.

Belongs to the BUD8/9 family. Interacts with RAX1 RAX2 at the proximal or distal pole in unbudded cells. N- and O-glycosylated.

It localises to the cell membrane. The protein resides in the bud tip. In terms of biological role, involved in positioning the distal bud pole signal. The chain is Bud site selection protein 8 from Saccharomyces cerevisiae (strain ATCC 204508 / S288c) (Baker's yeast).